Here is a 739-residue protein sequence, read N- to C-terminus: Adenosylcobalamin-dependent ribonucleoside-triphosphate reductase (739 aa).

Residues cysteine 119 and cysteine 419 are joined by a disulfide bond. Residues 147–158 (SMPFSFLFDELM) form an effector region-1 region. Positions 168-313 (ARSNISQIPR…ICNLIGKAVV (146 aa)) are effector region-2. Active-site residues include cysteine 408 and glutamate 410. An adenosylcobalamin-binding-1 region spans residues 565–626 (FHYGAYLIQR…NPNFASAGTV (62 aa)). The adenosylcobalamin-binding-2 stretch occupies residues 685-724 (LQQAPKEPIDKETYEKRSQEITGNVEEVFSQLNSDVKDLE).

This sequence belongs to the class II ribonucleoside-triphosphate reductase family. In terms of assembly, monomer. Requires adenosylcob(III)alamin as cofactor.

The enzyme catalyses a 2'-deoxyribonucleoside 5'-triphosphate + [thioredoxin]-disulfide + H2O = a ribonucleoside 5'-triphosphate + [thioredoxin]-dithiol. Allosterically regulated by ATP and dNTP. This is Adenosylcobalamin-dependent ribonucleoside-triphosphate reductase (rtpR) from Lactobacillus leichmannii.